We begin with the raw amino-acid sequence, 230 residues long: UPF0494 membrane protein C1348.07 (230 aa).

3 consecutive transmembrane segments (helical) span residues tryptophan 78 to valine 98, isoleucine 120 to tyrosine 140, and alanine 148 to valine 168.

It belongs to the UPF0494 family.

The protein localises to the vacuole. It is found in the membrane. This chain is UPF0494 membrane protein C1348.07, found in Schizosaccharomyces pombe (strain 972 / ATCC 24843) (Fission yeast).